A 123-amino-acid polypeptide reads, in one-letter code: Large ribosomal subunit protein uL29 (123 aa).

The protein belongs to the universal ribosomal protein uL29 family.

This chain is Large ribosomal subunit protein uL29 (RPL35), found in Euphorbia esula (Leafy spurge).